The primary structure comprises 2359 residues: Pre-mRNA-processing-splicing factor 8A (2359 aa).

The interval 1-54 (MWNNNDGMPLAPPGTGGSMMPPPPAAHPSYTALPPPSNPTPPVEPTPEEAEAKL) is disordered. Residues 33-45 (LPPPSNPTPPVEP) show a composition bias toward pro residues. The MPN domain occupies 2127 to 2258 (TYIMPKNILK…LTSYKLTQTG (132 aa)).

In terms of assembly, interacts with CLO.

The protein localises to the nucleus. Its function is as follows. Functions as a scaffold that mediates the ordered assembly of spliceosomal proteins and snRNAs. Required for the assembly of the U4/U6-U5 tri-snRNP complex. Required for embryo development. Required for splicing efficiency of COOLAIR introns and usage of the proximal poly(A) site. COOLAIR is a set of long non-coding antisense transcripts produced at the FLOWERING LOCUS C (FLC). COOLAIR initiates just downstream of the major sense transcript poly(A) site and terminates either early or extends into the FLC promoter region. Splicing of COOLAIR by PRP8A is functionally important for FLC regulation. The chain is Pre-mRNA-processing-splicing factor 8A from Arabidopsis thaliana (Mouse-ear cress).